The chain runs to 181 residues: Mitochondrial inner membrane protein Mpv17 (181 aa).

The next 4 membrane-spanning stretches (helical) occupy residues 20–37 (MCIAGTISGSGDCLAQYL), 51–67 (FSFLSSCFMAPSLFIWF), 86–103 (LCIDQLCFSPCFNAAILF), and 152–169 (VILNQVVAFFWNCYLSYI).

This sequence belongs to the peroxisomal membrane protein PXMP2/4 family.

It is found in the mitochondrion inner membrane. Functionally, involved in mitochondria homeostasis. This Caenorhabditis elegans protein is Mitochondrial inner membrane protein Mpv17.